A 470-amino-acid polypeptide reads, in one-letter code: Membrane-bound lytic murein transglycosylase F (470 aa).

The first 21 residues, 1 to 21 (MLKEKLIIIITLVMLLCACDI), serve as a signal peptide directing secretion. The tract at residues 22–259 (QEQSTQLAQI…VLEEKYFGHV (238 aa)) is non-LT domain. The tract at residues 260–470 (RQFNYVNTLA…PKIGDEVEAK (211 aa)) is LT domain. Glu-304 is a catalytic residue.

The protein in the N-terminal section; belongs to the bacterial solute-binding protein 3 family. This sequence in the C-terminal section; belongs to the transglycosylase Slt family.

The protein resides in the cell outer membrane. It catalyses the reaction Exolytic cleavage of the (1-&gt;4)-beta-glycosidic linkage between N-acetylmuramic acid (MurNAc) and N-acetylglucosamine (GlcNAc) residues in peptidoglycan, from either the reducing or the non-reducing ends of the peptidoglycan chains, with concomitant formation of a 1,6-anhydrobond in the MurNAc residue.. Its function is as follows. Murein-degrading enzyme that degrades murein glycan strands and insoluble, high-molecular weight murein sacculi, with the concomitant formation of a 1,6-anhydromuramoyl product. Lytic transglycosylases (LTs) play an integral role in the metabolism of the peptidoglycan (PG) sacculus. Their lytic action creates space within the PG sacculus to allow for its expansion as well as for the insertion of various structures such as secretion systems and flagella. In Pseudoalteromonas translucida (strain TAC 125), this protein is Membrane-bound lytic murein transglycosylase F.